Reading from the N-terminus, the 277-residue chain is Energy-coupling factor transporter ATP-binding protein EcfA1 (277 aa).

Positions 5–242 (VKVNNISFEY…IKMLKEIGLD (238 aa)) constitute an ABC transporter domain. 41-48 (GHNGSGKS) is a binding site for ATP.

The protein belongs to the ABC transporter superfamily. Energy-coupling factor EcfA family. Forms a stable energy-coupling factor (ECF) transporter complex composed of 2 membrane-embedded substrate-binding proteins (S component), 2 ATP-binding proteins (A component) and 2 transmembrane proteins (T component).

The protein resides in the cell membrane. ATP-binding (A) component of a common energy-coupling factor (ECF) ABC-transporter complex. Unlike classic ABC transporters this ECF transporter provides the energy necessary to transport a number of different substrates. The polypeptide is Energy-coupling factor transporter ATP-binding protein EcfA1 (Clostridioides difficile (strain 630) (Peptoclostridium difficile)).